The chain runs to 584 residues: 2-succinyl-5-enolpyruvyl-6-hydroxy-3-cyclohexene-1-carboxylate synthase (584 aa).

This sequence belongs to the TPP enzyme family. MenD subfamily. As to quaternary structure, homodimer. Mg(2+) serves as cofactor. Mn(2+) is required as a cofactor. It depends on thiamine diphosphate as a cofactor.

It carries out the reaction isochorismate + 2-oxoglutarate + H(+) = 5-enolpyruvoyl-6-hydroxy-2-succinyl-cyclohex-3-ene-1-carboxylate + CO2. Its pathway is quinol/quinone metabolism; 1,4-dihydroxy-2-naphthoate biosynthesis; 1,4-dihydroxy-2-naphthoate from chorismate: step 2/7. It functions in the pathway quinol/quinone metabolism; menaquinone biosynthesis. Functionally, catalyzes the thiamine diphosphate-dependent decarboxylation of 2-oxoglutarate and the subsequent addition of the resulting succinic semialdehyde-thiamine pyrophosphate anion to isochorismate to yield 2-succinyl-5-enolpyruvyl-6-hydroxy-3-cyclohexene-1-carboxylate (SEPHCHC). The chain is 2-succinyl-5-enolpyruvyl-6-hydroxy-3-cyclohexene-1-carboxylate synthase from Bacillus cytotoxicus (strain DSM 22905 / CIP 110041 / 391-98 / NVH 391-98).